Reading from the N-terminus, the 265-residue chain is Glutamate racemase (265 aa).

Substrate contacts are provided by residues 12–13 and 44–45; these read DS and YG. Cys75 functions as the Proton donor/acceptor in the catalytic mechanism. Position 76-77 (76-77) interacts with substrate; that stretch reads NT. Cys186 functions as the Proton donor/acceptor in the catalytic mechanism. 187–188 is a substrate binding site; the sequence is TH.

The protein belongs to the aspartate/glutamate racemases family.

It carries out the reaction L-glutamate = D-glutamate. It functions in the pathway cell wall biogenesis; peptidoglycan biosynthesis. Functionally, provides the (R)-glutamate required for cell wall biosynthesis. This chain is Glutamate racemase, found in Pseudomonas putida (strain ATCC 47054 / DSM 6125 / CFBP 8728 / NCIMB 11950 / KT2440).